Consider the following 580-residue polypeptide: Arginine--tRNA ligase (580 aa).

Residues 131 to 141 carry the 'HIGH' region motif; it reads ANPTGPMHVGH.

This sequence belongs to the class-I aminoacyl-tRNA synthetase family. In terms of assembly, monomer.

The protein localises to the cytoplasm. The catalysed reaction is tRNA(Arg) + L-arginine + ATP = L-arginyl-tRNA(Arg) + AMP + diphosphate. The polypeptide is Arginine--tRNA ligase (Cereibacter sphaeroides (strain ATCC 17029 / ATH 2.4.9) (Rhodobacter sphaeroides)).